Consider the following 478-residue polypeptide: MGSKSPEGHNQAPHGAPNALDKPANPAVKAQNGSGSADLDRGTISNDDDDADDDEKETQINGSSNAGRIYLFPSRPAKFQHRPTDTPSTPEKKKKKRKRSKKKAKPTEAKQTSPPRVPLSTLFPSGYPVGELVADDRTSRVTDEETRYNSRLWDDGFLADYRQAAEIHRQVRQYAQRELIKPGATLSSIADGIEDGVRALSGHQGLETGDGLNAGMGFPTGLCVNHVAAHWTPNPGAKEVVLEKSDVLKVDFGVHVNGRIVDSAFTVAFDPVYDNLLEAVKEATNTGIAHAGIDARVSDIGAAIQEVMESYELEIAGKSVPVKAIRNITGHNILRYHIHGGKQVPFIKNNRRDKMEEGEVFAIETFGSTGKGYLDDDFGIYGYGRNEHVPATGLRLASARSLVKTIDANFGSLVFSRRYLERLGVKSYHLAMKNLIDNGIVESYAPLVDVKGSYTAQFEHTILLHSGGKEVISRGDDY.

Positions 1–124 (MGSKSPEGHN…PRVPLSTLFP (124 aa)) are disordered. Residues 46 to 56 (NDDDDADDDEK) show a composition bias toward acidic residues. Residues 92 to 104 (KKKKKRKRSKKKA) are compositionally biased toward basic residues. His230 is a substrate binding site. A divalent metal cation is bound by residues Asp251, Asp262, and His331. His339 lines the substrate pocket. A divalent metal cation is bound by residues Glu364 and Glu459.

The protein belongs to the peptidase M24A family. Methionine aminopeptidase eukaryotic type 2 subfamily. Co(2+) is required as a cofactor. The cofactor is Zn(2+). Mn(2+) serves as cofactor. It depends on Fe(2+) as a cofactor.

It is found in the cytoplasm. It catalyses the reaction Release of N-terminal amino acids, preferentially methionine, from peptides and arylamides.. Cotranslationally removes the N-terminal methionine from nascent proteins. The N-terminal methionine is often cleaved when the second residue in the primary sequence is small and uncharged (Met-Ala-, Cys, Gly, Pro, Ser, Thr, or Val). In Aspergillus clavatus (strain ATCC 1007 / CBS 513.65 / DSM 816 / NCTC 3887 / NRRL 1 / QM 1276 / 107), this protein is Methionine aminopeptidase 2-1.